A 396-amino-acid polypeptide reads, in one-letter code: MSKKVTIAYGGSNGNKFDDGVYEGTYDGVRKLIVGEDFHGIVYLKIQYVKNGDVVVKEHGRARGTHITETEFEVKCPDEYITSIWGTCRNDHHRYKSTGGRTFEQLTAADKYDINLAAKMGTPMYWNTVSELQFKTSHGRTSEQFRMPGTGGSNGVSWDDGAYDRLSKLCVGEDAHCVSSVEFHYVKGNDRITHCHGKDSKEHDKDGFISSLTFKTSMNRSSEKFGKPVGTKFQLEAKGFDKIVGFRGRSSVNRINALGANFAVVVVPPVKKLNAKGGVLGNEWDDGIHDDARMITFKLYFNKEYITSVEGHYGKRLAAPNASASAMSSFFTGYMTMLKFNTNRTTYQVLSHSPEYTYEGTSFKLEEKDHKIVGFYGKTEVSLNQIGVYVKPIANA.

Jacalin-type lectin domains lie at 3–138 (KKVT…KTSH), 144–264 (QFRM…NFAV), and 270–392 (VKKL…YVKP).

The protein belongs to the jacalin lectin family.

This chain is Jacalin-related lectin 45 (JAL45), found in Arabidopsis thaliana (Mouse-ear cress).